The following is a 283-amino-acid chain: Phenylethanolamine N-methyltransferase (283 aa).

Serine 7 is subject to Phosphoserine. Residues tyrosine 35, tyrosine 40, 79-80 (GS), tyrosine 85, aspartate 101, asparagine 106, 158-159 (DV), and alanine 181 each bind S-adenosyl-L-methionine. 2 residues coordinate octopamine: glutamate 219 and aspartate 267.

It belongs to the class I-like SAM-binding methyltransferase superfamily. NNMT/PNMT/TEMT family.

The enzyme catalyses phenylethanolamine + S-adenosyl-L-methionine = N-methylphenylethanolamine + S-adenosyl-L-homocysteine + H(+). It catalyses the reaction (R)-noradrenaline + S-adenosyl-L-methionine = (R)-adrenaline + S-adenosyl-L-homocysteine + H(+). It carries out the reaction (R)-normetanephrine + S-adenosyl-L-methionine = (R)-metanephrine + S-adenosyl-L-homocysteine + H(+). The catalysed reaction is (R)-octopamine + S-adenosyl-L-methionine = (R)-synephrine + S-adenosyl-L-homocysteine + H(+). It participates in catecholamine biosynthesis; (R)-adrenaline biosynthesis; (R)-adrenaline from (R)-noradrenaline: step 1/1. Functionally, catalyzes the transmethylation of nonepinephrine (noradrenaline) to form epinephrine (adrenaline), using S-adenosyl-L-methionine as the methyl donor. Other substrates include phenylethanolamine, octopamine and normetanephrine. This Sus scrofa (Pig) protein is Phenylethanolamine N-methyltransferase (PNMT).